The following is a 292-amino-acid chain: Phosphatidylglycerol--prolipoprotein diacylglyceryl transferase (292 aa).

Transmembrane regions (helical) follow at residues 21–41 (VSLH…MWLA), 60–80 (LLYA…VLFY), 98–118 (GGMS…VFAH), 124–144 (FFQV…AGRL), 198–218 (SQLY…NLFI), 225–245 (GAVS…VEFF), and 258–278 (ISMG…MMIW). Position 143 (R143) interacts with a 1,2-diacyl-sn-glycero-3-phospho-(1'-sn-glycerol).

The protein belongs to the Lgt family.

It is found in the cell inner membrane. It carries out the reaction L-cysteinyl-[prolipoprotein] + a 1,2-diacyl-sn-glycero-3-phospho-(1'-sn-glycerol) = an S-1,2-diacyl-sn-glyceryl-L-cysteinyl-[prolipoprotein] + sn-glycerol 1-phosphate + H(+). Its pathway is protein modification; lipoprotein biosynthesis (diacylglyceryl transfer). Functionally, catalyzes the transfer of the diacylglyceryl group from phosphatidylglycerol to the sulfhydryl group of the N-terminal cysteine of a prolipoprotein, the first step in the formation of mature lipoproteins. This Erwinia tasmaniensis (strain DSM 17950 / CFBP 7177 / CIP 109463 / NCPPB 4357 / Et1/99) protein is Phosphatidylglycerol--prolipoprotein diacylglyceryl transferase.